The chain runs to 320 residues: Ferrochelatase (320 aa).

Residues His194 and Glu275 each coordinate Fe cation.

It belongs to the ferrochelatase family. Monomer.

Its subcellular location is the cytoplasm. The enzyme catalyses heme b + 2 H(+) = protoporphyrin IX + Fe(2+). It participates in porphyrin-containing compound metabolism; protoheme biosynthesis; protoheme from protoporphyrin-IX: step 1/1. In terms of biological role, catalyzes the ferrous insertion into protoporphyrin IX. The sequence is that of Ferrochelatase from Escherichia coli O127:H6 (strain E2348/69 / EPEC).